Reading from the N-terminus, the 344-residue chain is UDP-N-acetylenolpyruvoylglucosamine reductase (344 aa).

An FAD-binding PCMH-type domain is found at Ile-19–Asn-189. Arg-165 is a catalytic residue. The active-site Proton donor is Ser-235. Residue Glu-331 is part of the active site.

It belongs to the MurB family. It depends on FAD as a cofactor.

Its subcellular location is the cytoplasm. The enzyme catalyses UDP-N-acetyl-alpha-D-muramate + NADP(+) = UDP-N-acetyl-3-O-(1-carboxyvinyl)-alpha-D-glucosamine + NADPH + H(+). It participates in cell wall biogenesis; peptidoglycan biosynthesis. Its function is as follows. Cell wall formation. The protein is UDP-N-acetylenolpyruvoylglucosamine reductase of Buchnera aphidicola subsp. Schizaphis graminum (strain Sg).